Here is a 291-residue protein sequence, read N- to C-terminus: Phosphatidylserine decarboxylase proenzyme 2 (291 aa).

Catalysis depends on charge relay system; for autoendoproteolytic cleavage activity residues Asp112 and Ser251. The Schiff-base intermediate with substrate; via pyruvic acid; for decarboxylase activity role is filled by Ser251. Ser251 carries the post-translational modification Pyruvic acid (Ser); by autocatalysis.

It belongs to the phosphatidylserine decarboxylase family. PSD-B subfamily. Prokaryotic type II sub-subfamily. In terms of assembly, heterodimer of a large membrane-associated beta subunit and a small pyruvoyl-containing alpha subunit. Pyruvate is required as a cofactor. In terms of processing, is synthesized initially as an inactive proenzyme. Formation of the active enzyme involves a self-maturation process in which the active site pyruvoyl group is generated from an internal serine residue via an autocatalytic post-translational modification. Two non-identical subunits are generated from the proenzyme in this reaction, and the pyruvate is formed at the N-terminus of the alpha chain, which is derived from the carboxyl end of the proenzyme. The autoendoproteolytic cleavage occurs by a canonical serine protease mechanism, in which the side chain hydroxyl group of the serine supplies its oxygen atom to form the C-terminus of the beta chain, while the remainder of the serine residue undergoes an oxidative deamination to produce ammonia and the pyruvoyl prosthetic group on the alpha chain. During this reaction, the Ser that is part of the protease active site of the proenzyme becomes the pyruvoyl prosthetic group, which constitutes an essential element of the active site of the mature decarboxylase.

The protein localises to the cell membrane. The catalysed reaction is a 1,2-diacyl-sn-glycero-3-phospho-L-serine + H(+) = a 1,2-diacyl-sn-glycero-3-phosphoethanolamine + CO2. The protein operates within phospholipid metabolism; phosphatidylethanolamine biosynthesis; phosphatidylethanolamine from CDP-diacylglycerol: step 2/2. Functionally, catalyzes the formation of phosphatidylethanolamine (PtdEtn) from phosphatidylserine (PtdSer). This chain is Phosphatidylserine decarboxylase proenzyme 2, found in Clostridium acetobutylicum (strain ATCC 824 / DSM 792 / JCM 1419 / IAM 19013 / LMG 5710 / NBRC 13948 / NRRL B-527 / VKM B-1787 / 2291 / W).